We begin with the raw amino-acid sequence, 560 residues long: Putative transport protein ESA_02488 (560 aa).

The next 5 helical transmembrane spans lie at 8–28 (LLNGNYILLLFVVLALGLCLG), 32–52 (LGSVQLGNSIGVLVVSLLLGQ), 66–86 (FMLFIFCVGVEAGPNFFSIFF), 91–111 (NYLMLALVMVGSALLIALGLG), and 158–178 (HLSLGYALTYLIGLVSLIFGA). RCK C-terminal domains lie at 200-288 (RGLD…SFRN) and 292-373 (VFDR…RIGF). 5 consecutive transmembrane segments (helical) span residues 383–403 (LLAFCAFFIVGLMIGMITFQF), 406–426 (FSFGIGNAAGLLFAGIMLGFL), 447–467 (FGLMVFMAGVGLSAGSGIGHG), 475–495 (MLFAGLIVSLLPVVICFLFGA), and 539–559 (YAIANVLLTLAGTLIVIIWPG).

It belongs to the AAE transporter (TC 2.A.81) family. YbjL subfamily.

The protein resides in the cell membrane. The chain is Putative transport protein ESA_02488 from Cronobacter sakazakii (strain ATCC BAA-894) (Enterobacter sakazakii).